An 86-amino-acid polypeptide reads, in one-letter code: Gas vesicle protein A1 (86 aa).

This sequence belongs to the gas vesicle GvpA family. In terms of assembly, the gas vesicle shell is 2 nm thick and consists of a single layer of this protein. It forms helical ribs nearly perpendicular to the long axis of the vesicle.

Its subcellular location is the gas vesicle shell. Gas vesicles are hollow, gas filled proteinaceous nanostructures found in some microorganisms. During planktonic growth they allow positioning of the organism at a favorable depth for light or nutrient acquisition. GvpA forms the protein shell. Its function is as follows. It is not clear if the 2 type A proteins in this organism are functionally redundant. In terms of biological role, when the full gvp locus (gvpA1-gvpP-gvpQ-gvpA2-gvpR-gvpN-gvpF-gvpG-gvpL-gvpS-gvpK-gvpJ-gvpT-gvpU, called pNL26) is expressed in E.coli gas vesicles are made. The protein is Gas vesicle protein A1 of Priestia megaterium (Bacillus megaterium).